The following is a 568-amino-acid chain: 2-succinyl-5-enolpyruvyl-6-hydroxy-3-cyclohexene-1-carboxylate synthase (568 aa).

It belongs to the TPP enzyme family. MenD subfamily. Homodimer. Requires Mg(2+) as cofactor. Mn(2+) serves as cofactor. The cofactor is thiamine diphosphate.

It carries out the reaction isochorismate + 2-oxoglutarate + H(+) = 5-enolpyruvoyl-6-hydroxy-2-succinyl-cyclohex-3-ene-1-carboxylate + CO2. It participates in quinol/quinone metabolism; 1,4-dihydroxy-2-naphthoate biosynthesis; 1,4-dihydroxy-2-naphthoate from chorismate: step 2/7. The protein operates within quinol/quinone metabolism; menaquinone biosynthesis. Its function is as follows. Catalyzes the thiamine diphosphate-dependent decarboxylation of 2-oxoglutarate and the subsequent addition of the resulting succinic semialdehyde-thiamine pyrophosphate anion to isochorismate to yield 2-succinyl-5-enolpyruvyl-6-hydroxy-3-cyclohexene-1-carboxylate (SEPHCHC). This Pasteurella multocida (strain Pm70) protein is 2-succinyl-5-enolpyruvyl-6-hydroxy-3-cyclohexene-1-carboxylate synthase.